The sequence spans 199 residues: Recombination protein RecR (199 aa).

The C4-type zinc finger occupies 56-71; that stretch reads CSICFNVSQDDQCRIC. The region spanning 79 to 174 is the Toprim domain; it reads SVLCVVEEYK…RVTRLASGLP (96 aa).

This sequence belongs to the RecR family.

Its function is as follows. May play a role in DNA repair. It seems to be involved in an RecBC-independent recombinational process of DNA repair. It may act with RecF and RecO. The protein is Recombination protein RecR of Nocardioides sp. (strain ATCC BAA-499 / JS614).